The chain runs to 573 residues: Potassium-transporting ATPase potassium-binding subunit (573 aa).

10 helical membrane-spanning segments follow: residues 6-26, 66-86, 135-155, 177-197, 257-277, 283-303, 382-402, 428-448, 493-513, and 537-557; these read ILFA…GSYI, FFSL…ILLL, ALAV…IALI, VFWI…FQGV, IQMV…GKWV, GWLI…VMTI, IFGG…LAVF, MFAL…AAVI, ITIA…VIML, and FIFA…TIFP.

The protein belongs to the KdpA family. As to quaternary structure, the system is composed of three essential subunits: KdpA, KdpB and KdpC.

It is found in the cell inner membrane. Its function is as follows. Part of the high-affinity ATP-driven potassium transport (or Kdp) system, which catalyzes the hydrolysis of ATP coupled with the electrogenic transport of potassium into the cytoplasm. This subunit binds the periplasmic potassium ions and delivers the ions to the membrane domain of KdpB through an intramembrane tunnel. The chain is Potassium-transporting ATPase potassium-binding subunit from Francisella tularensis subsp. holarctica (strain FTNF002-00 / FTA).